A 434-amino-acid chain; its full sequence is Nicotinate phosphoribosyltransferase (434 aa).

His-242 carries the phosphohistidine; by autocatalysis modification.

The protein belongs to the NAPRTase family. In terms of processing, transiently phosphorylated on a His residue during the reaction cycle. Phosphorylation strongly increases the affinity for substrates and increases the rate of nicotinate D-ribonucleotide production. Dephosphorylation regenerates the low-affinity form of the enzyme, leading to product release.

It catalyses the reaction nicotinate + 5-phospho-alpha-D-ribose 1-diphosphate + ATP + H2O = nicotinate beta-D-ribonucleotide + ADP + phosphate + diphosphate. The protein operates within cofactor biosynthesis; NAD(+) biosynthesis; nicotinate D-ribonucleotide from nicotinate: step 1/1. Its function is as follows. Catalyzes the synthesis of beta-nicotinate D-ribonucleotide from nicotinate and 5-phospho-D-ribose 1-phosphate at the expense of ATP. This chain is Nicotinate phosphoribosyltransferase, found in Agrobacterium fabrum (strain C58 / ATCC 33970) (Agrobacterium tumefaciens (strain C58)).